Here is a 147-residue protein sequence, read N- to C-terminus: Large ribosomal subunit protein uL16 (147 aa).

The protein belongs to the universal ribosomal protein uL16 family. Part of the 50S ribosomal subunit.

Functionally, binds 23S rRNA and is also seen to make contacts with the A and possibly P site tRNAs. The chain is Large ribosomal subunit protein uL16 from Clostridium acetobutylicum (strain ATCC 824 / DSM 792 / JCM 1419 / IAM 19013 / LMG 5710 / NBRC 13948 / NRRL B-527 / VKM B-1787 / 2291 / W).